A 140-amino-acid polypeptide reads, in one-letter code: MSKKWLNKVHWDDNGLVPVIVQEQGSNDVLMFAFMNREALQKTVESGEAVFWSRSRKRLWHKGEESGHIQKVHEIRLDCDEDVILLRVTQIGGIACHTGRHACFFQKFEGNVEDGDWHTVEPVLKNPDDIYAGKPGHNHE.

D78 is a binding site for Mg(2+). A Zn(2+)-binding site is contributed by C79. Residues D80 and D82 each contribute to the Mg(2+) site. Zn(2+) is bound by residues C96 and C103.

It belongs to the PRA-CH family. Homodimer. It depends on Mg(2+) as a cofactor. Requires Zn(2+) as cofactor.

The protein localises to the cytoplasm. The enzyme catalyses 1-(5-phospho-beta-D-ribosyl)-5'-AMP + H2O = 1-(5-phospho-beta-D-ribosyl)-5-[(5-phospho-beta-D-ribosylamino)methylideneamino]imidazole-4-carboxamide. Its pathway is amino-acid biosynthesis; L-histidine biosynthesis; L-histidine from 5-phospho-alpha-D-ribose 1-diphosphate: step 3/9. Its function is as follows. Catalyzes the hydrolysis of the adenine ring of phosphoribosyl-AMP. The protein is Phosphoribosyl-AMP cyclohydrolase of Ralstonia pickettii (strain 12J).